A 480-amino-acid polypeptide reads, in one-letter code: MTLSFTTHWRDELPDFYTSLSPTPLDNARLIWRNAPLAQQLGVPDALFAPESGAGVWGGEALLPGMSPLAQVYSGHQFGAWAGQLGDGRGILLGEQQLADGRRYDWHLKGAGLTPYSRMGDGRAVLRSTIRESLASEAMHALGIPTTRALAMVTSDTPVYRERVEPGAMLMRVAESHVRFGHFEHFYYRREPQKVQQLADYVIRHHWPQLQDEADKYLLWFRDIVMRTAQTIASWQTVGFAHGVMNTDNMSILGLTIDYGPYGFLDDFQPDFICNHSDYQGRYSFENQPAVGLWNLQRLAQSLSPFISAEALNAALDEYQHALLTAYGQRMRDKLGLFSQQKGDNDLLDGLFALMIREKSDYTRTFRLLSHSEQLSAASPLRDEFIDRAAFDSWFAGYRARLRDEQVDDAQRQQRMQGVNPALVLRNWLAQRAIEQAEAGDMGELERLHAALADPFTDREDDYVRRPPDWGKRLEVSCSS.

8 residues coordinate ATP: Gly-86, Gly-88, Arg-89, Lys-109, Asp-121, Gly-122, Arg-172, and Arg-179. Asp-248 acts as the Proton acceptor in catalysis. Mg(2+)-binding residues include Asn-249 and Asp-258. Asp-258 contributes to the ATP binding site.

It belongs to the SELO family. Mg(2+) serves as cofactor. Requires Mn(2+) as cofactor.

It carries out the reaction L-seryl-[protein] + ATP = 3-O-(5'-adenylyl)-L-seryl-[protein] + diphosphate. The enzyme catalyses L-threonyl-[protein] + ATP = 3-O-(5'-adenylyl)-L-threonyl-[protein] + diphosphate. It catalyses the reaction L-tyrosyl-[protein] + ATP = O-(5'-adenylyl)-L-tyrosyl-[protein] + diphosphate. The catalysed reaction is L-histidyl-[protein] + UTP = N(tele)-(5'-uridylyl)-L-histidyl-[protein] + diphosphate. It carries out the reaction L-seryl-[protein] + UTP = O-(5'-uridylyl)-L-seryl-[protein] + diphosphate. The enzyme catalyses L-tyrosyl-[protein] + UTP = O-(5'-uridylyl)-L-tyrosyl-[protein] + diphosphate. Functionally, nucleotidyltransferase involved in the post-translational modification of proteins. It can catalyze the addition of adenosine monophosphate (AMP) or uridine monophosphate (UMP) to a protein, resulting in modifications known as AMPylation and UMPylation. The protein is Protein nucleotidyltransferase YdiU of Klebsiella pneumoniae subsp. pneumoniae (strain ATCC 700721 / MGH 78578).